We begin with the raw amino-acid sequence, 362 residues long: Chorismate synthase (362 aa).

2 residues coordinate NADP(+): Arg-48 and Arg-54. FMN is bound by residues 125-127 (RSS), 237-238 (NA), Gly-277, 292-296 (KPTSS), and Arg-318.

It belongs to the chorismate synthase family. Homotetramer. Requires FMNH2 as cofactor.

The catalysed reaction is 5-O-(1-carboxyvinyl)-3-phosphoshikimate = chorismate + phosphate. It functions in the pathway metabolic intermediate biosynthesis; chorismate biosynthesis; chorismate from D-erythrose 4-phosphate and phosphoenolpyruvate: step 7/7. Its function is as follows. Catalyzes the anti-1,4-elimination of the C-3 phosphate and the C-6 proR hydrogen from 5-enolpyruvylshikimate-3-phosphate (EPSP) to yield chorismate, which is the branch point compound that serves as the starting substrate for the three terminal pathways of aromatic amino acid biosynthesis. This reaction introduces a second double bond into the aromatic ring system. The sequence is that of Chorismate synthase from Idiomarina loihiensis (strain ATCC BAA-735 / DSM 15497 / L2-TR).